Consider the following 180-residue polypeptide: Large ribosomal subunit protein uL5 (180 aa).

This sequence belongs to the universal ribosomal protein uL5 family. As to quaternary structure, part of the 50S ribosomal subunit; part of the 5S rRNA/L5/L18/L25 subcomplex. Contacts the 5S rRNA and the P site tRNA. Forms a bridge to the 30S subunit in the 70S ribosome.

Its function is as follows. This is one of the proteins that bind and probably mediate the attachment of the 5S RNA into the large ribosomal subunit, where it forms part of the central protuberance. In the 70S ribosome it contacts protein S13 of the 30S subunit (bridge B1b), connecting the 2 subunits; this bridge is implicated in subunit movement. Contacts the P site tRNA; the 5S rRNA and some of its associated proteins might help stabilize positioning of ribosome-bound tRNAs. The polypeptide is Large ribosomal subunit protein uL5 (Latilactobacillus sakei subsp. sakei (strain 23K) (Lactobacillus sakei subsp. sakei)).